A 205-amino-acid chain; its full sequence is Urease accessory protein UreE (205 aa).

Residues 178 to 196 show a composition bias toward basic residues; it reads AHFHAGGHGHVHSGHGHGG. The interval 178–205 is disordered; it reads AHFHAGGHGHVHSGHGHGGKHGEHDAES.

The protein belongs to the UreE family.

It is found in the cytoplasm. In terms of biological role, involved in urease metallocenter assembly. Binds nickel. Probably functions as a nickel donor during metallocenter assembly. The protein is Urease accessory protein UreE of Bordetella pertussis (strain Tohama I / ATCC BAA-589 / NCTC 13251).